Here is a 158-residue protein sequence, read N- to C-terminus: Phosphopantetheine adenylyltransferase (158 aa).

Thr10 lines the substrate pocket. ATP contacts are provided by residues 10–11 and His18; that span reads TF. Substrate contacts are provided by Lys42, Leu74, and Arg88. Residues 89–91, Glu99, and 124–130 each bind ATP; these read GLR and NSFISST.

It belongs to the bacterial CoaD family. In terms of assembly, homohexamer. It depends on Mg(2+) as a cofactor.

Its subcellular location is the cytoplasm. It catalyses the reaction (R)-4'-phosphopantetheine + ATP + H(+) = 3'-dephospho-CoA + diphosphate. Its pathway is cofactor biosynthesis; coenzyme A biosynthesis; CoA from (R)-pantothenate: step 4/5. Reversibly transfers an adenylyl group from ATP to 4'-phosphopantetheine, yielding dephospho-CoA (dPCoA) and pyrophosphate. In Shewanella sediminis (strain HAW-EB3), this protein is Phosphopantetheine adenylyltransferase.